The chain runs to 360 residues: MTVTALGVPTVRGRSEGSAIASDAPGDGPLLDRFGRSATDLRVSLTDRCNLRCGYCMPAEGLNWLPGEQLLGPAELARLLRIAVTRLGITSVRFTGGEPLLARHLEEVVAAAAQLRPRPEISLTTNGVGLAKRAAALAEAGLDRVNVSLDTVDRAHFAAITRRDRLTDVLDGLAGARAAGLTPVKVNAVLDPETGRQDVVELLRFCLEQGYQLRVIEQMPLDAGHQWRRNALLGSDDVLAALQPHFRLRPDPAPRGSAPAELWLVDAGPDTPAGKFGVIASVSHAFCSTCDRTRLTADGQVRSCLFSTEETDLRGLLRAGAGDEAIEAAWRSAMWAKPAGHGINNPDFVQPQRPMSAIGG.

A Radical SAM core domain is found at 33-251 (RFGRSATDLR…LQPHFRLRPD (219 aa)). Arg-42 lines the GTP pocket. Positions 49 and 53 each coordinate [4Fe-4S] cluster. Tyr-55 contributes to the S-adenosyl-L-methionine binding site. Cys-56 is a binding site for [4Fe-4S] cluster. A GTP-binding site is contributed by Arg-93. Residue Gly-97 coordinates S-adenosyl-L-methionine. Thr-124 contacts GTP. Ser-148 serves as a coordination point for S-adenosyl-L-methionine. Lys-185 lines the GTP pocket. Residue Met-219 participates in S-adenosyl-L-methionine binding. [4Fe-4S] cluster-binding residues include Cys-287 and Cys-290. 292 to 294 (RTR) is a binding site for GTP. Cys-304 is a [4Fe-4S] cluster binding site.

Belongs to the radical SAM superfamily. MoaA family. In terms of assembly, monomer and homodimer. Requires [4Fe-4S] cluster as cofactor.

The catalysed reaction is GTP + AH2 + S-adenosyl-L-methionine = (8S)-3',8-cyclo-7,8-dihydroguanosine 5'-triphosphate + 5'-deoxyadenosine + L-methionine + A + H(+). It participates in cofactor biosynthesis; molybdopterin biosynthesis. Its function is as follows. Catalyzes the cyclization of GTP to (8S)-3',8-cyclo-7,8-dihydroguanosine 5'-triphosphate. This chain is GTP 3',8-cyclase, found in Mycobacterium marinum (strain ATCC BAA-535 / M).